The chain runs to 338 residues: Ferrochelatase (338 aa).

2 residues coordinate Fe cation: His202 and Glu283.

It belongs to the ferrochelatase family.

The protein localises to the cytoplasm. The enzyme catalyses heme b + 2 H(+) = protoporphyrin IX + Fe(2+). The protein operates within porphyrin-containing compound metabolism; protoheme biosynthesis; protoheme from protoporphyrin-IX: step 1/1. Catalyzes the ferrous insertion into protoporphyrin IX. The protein is Ferrochelatase of Acinetobacter baumannii (strain ATCC 17978 / DSM 105126 / CIP 53.77 / LMG 1025 / NCDC KC755 / 5377).